We begin with the raw amino-acid sequence, 375 residues long: Prophage integrase IntE (375 aa).

The Core-binding (CB) domain maps to 82–167 (ITTSTWLDRY…VLIDVFKEAQ (86 aa)). Residues 189–375 (ITRQRLSLEE…RGKGWSKVAL (187 aa)) enclose the Tyr recombinase domain. Catalysis depends on residues Arg226, Lys249, His330, Arg333, and His353. The segment at 350–375 (LLGHKTQQQTDRYHDDRGKGWSKVAL) is disordered. Tyr362 acts as the O-(3'-phospho-DNA)-tyrosine intermediate in catalysis.

It belongs to the 'phage' integrase family.

In terms of biological role, integrase from the cryptic lambdoid prophage e14. Integrase is necessary for integration of the phage into the host genome by site-specific recombination. In conjunction with excisionase, integrase is also necessary for excision of the prophage from the host genome. In Escherichia coli (strain K12), this protein is Prophage integrase IntE (intE).